Reading from the N-terminus, the 515-residue chain is Protein DETOXIFICATION 42 (515 aa).

Residues 1–35 lie on the Cytoplasmic side of the membrane; the sequence is MMSEDGYNTDFPRNPLYIFFSDFRSVLKFDELGLE. Residues 36 to 56 traverse the membrane as a helical segment; sequence IARIALPAALALTADPIASLV. The Extracellular portion of the chain corresponds to 57 to 58; it reads DT. A helical transmembrane segment spans residues 59–79; the sequence is AFIGQIGPVELAAVGVSIALF. The Cytoplasmic portion of the chain corresponds to 80-168; sequence NQVSRIAIFP…AKKRNIPSAS (89 aa). Residues 169 to 189 form a helical membrane-spanning segment; the sequence is SALIIGGVLGLFQAVFLISAA. The Extracellular segment spans residues 190 to 211; it reads KPLLSFMGVKHDSPMMRPSQRY. Residues 212 to 232 traverse the membrane as a helical segment; sequence LSLRSLGAPAVLLSLAAQGVF. The Cytoplasmic segment spans residues 233-242; that stretch reads RGFKDTTTPL. A helical membrane pass occupies residues 243–263; it reads FATVIGDVTNIILDPIFIFVF. Over 264–266 the chain is Extracellular; it reads RLG. A helical membrane pass occupies residues 267–287; the sequence is VTGAATAHVISQYLMCGILLW. At 288–312 the chain is on the cytoplasmic side; it reads KLMGQVDIFNMSTKHLQFCRFMKNG. A helical membrane pass occupies residues 313 to 333; the sequence is FLLLMRVIAVTFCVTLSASLA. The Extracellular segment spans residues 334–349; sequence AREGSTSMAAFQVCLQ. Residues 350-370 form a helical membrane-spanning segment; it reads VWLATSLLADGYAVAGQAILA. The Cytoplasmic segment spans residues 371-390; it reads SAFAKKDYKRAAATASRVLQ. Residues 391-411 traverse the membrane as a helical segment; sequence LGLVLGFVLAVILGAGLHFGA. Residues 412-423 are Extracellular-facing; it reads RVFTKDDKVLHL. A helical transmembrane segment spans residues 424–444; that stretch reads ISIGLPFVAGTQPINALAFVF. The Cytoplasmic segment spans residues 445–453; that stretch reads DGVNFGASD. A helical membrane pass occupies residues 454-474; that stretch reads FGYAAASLVMVAIVSILCLLF. Topologically, residues 475–480 are extracellular; that stretch reads LSSTHG. A helical transmembrane segment spans residues 481–501; it reads FIGLWFGLTIYMSLRAAVGFW. Residues 502 to 515 are Cytoplasmic-facing; that stretch reads RIGTGTGPWSFLRS.

Belongs to the multi antimicrobial extrusion (MATE) (TC 2.A.66.1) family. As to expression, expressed in roots, but not in shoots. Detected in the mature regions of the root, extending from above the root-hair region to the root-shoot junction.

The protein localises to the cell membrane. In terms of biological role, citrate transporter critical for aluminum tolerance. Responsible for citrate exudation into the rhizosphere to protect roots from aluminum toxicity. The protein is Protein DETOXIFICATION 42 of Arabidopsis thaliana (Mouse-ear cress).